A 59-amino-acid polypeptide reads, in one-letter code: uncharacterized protein (59 aa).

The helical transmembrane segment at 7 to 24 threads the bilayer; sequence FLLVFIILAQLLSCTPSA.

The protein localises to the membrane. This is an uncharacterized protein from Rickettsia prowazekii (strain Madrid E).